The primary structure comprises 491 residues: Angiopoietin-related protein 1 (491 aa).

An N-terminal signal peptide occupies residues 1-23 (MKTFTWTLGVLFFLLVDTGHCRG). Positions 80 to 168 (ITRMDLENLK…LNVTTEMLKM (89 aa)) form a coiled coil. N-linked (GlcNAc...) asparagine glycans are attached at residues Asn160 and Asn188. The 221-residue stretch at 271–491 (FINEGPFKDC…AVQMMIKPID (221 aa)) folds into the Fibrinogen C-terminal domain. Intrachain disulfides connect Cys280–Cys309 and Cys432–Cys445.

As to expression, highly expressed in adrenal gland, placenta, thyroid gland, heart, skeletal muscle and small intestine. Weakly expressed in testis, ovary, colon, pancreas, kidney and stomach.

The protein localises to the secreted. The polypeptide is Angiopoietin-related protein 1 (ANGPTL1) (Homo sapiens (Human)).